A 362-amino-acid polypeptide reads, in one-letter code: Histidinol-phosphate aminotransferase (362 aa).

Lys-210 is modified (N6-(pyridoxal phosphate)lysine).

It belongs to the class-II pyridoxal-phosphate-dependent aminotransferase family. Histidinol-phosphate aminotransferase subfamily. In terms of assembly, homodimer. Pyridoxal 5'-phosphate serves as cofactor.

The enzyme catalyses L-histidinol phosphate + 2-oxoglutarate = 3-(imidazol-4-yl)-2-oxopropyl phosphate + L-glutamate. It participates in amino-acid biosynthesis; L-histidine biosynthesis; L-histidine from 5-phospho-alpha-D-ribose 1-diphosphate: step 7/9. The polypeptide is Histidinol-phosphate aminotransferase (Rhodopirellula baltica (strain DSM 10527 / NCIMB 13988 / SH1)).